A 93-amino-acid polypeptide reads, in one-letter code: MKMFTVISYDIVDDQRRTSVMKVLKGYGVRVQYSVFEAILDAREFHDLSNQLRKIIDPGQDSIRCYRLDQVAAQRTVIYGIGLTTTDPTHYMV.

Aspartate 10 provides a ligand contact to Mg(2+).

It belongs to the CRISPR-associated endoribonuclease Cas2 protein family. As to quaternary structure, homodimer, forms a heterotetramer with a Cas1 homodimer. Mg(2+) serves as cofactor.

CRISPR (clustered regularly interspaced short palindromic repeat), is an adaptive immune system that provides protection against mobile genetic elements (viruses, transposable elements and conjugative plasmids). CRISPR clusters contain sequences complementary to antecedent mobile elements and target invading nucleic acids. CRISPR clusters are transcribed and processed into CRISPR RNA (crRNA). Functions as a ssRNA-specific endoribonuclease. Involved in the integration of spacer DNA into the CRISPR cassette. The protein is CRISPR-associated endoribonuclease Cas2 3 of Chloroflexus aurantiacus (strain ATCC 29366 / DSM 635 / J-10-fl).